Consider the following 78-residue polypeptide: Large ribosomal subunit protein bL28 (78 aa).

The tract at residues 1–23 is disordered; sequence MSRVCQVSGKRVQTGNNVSHANN. Polar residues predominate over residues 11–22; it reads RVQTGNNVSHAN.

This sequence belongs to the bacterial ribosomal protein bL28 family.

The protein is Large ribosomal subunit protein bL28 of Stenotrophomonas maltophilia (strain R551-3).